The primary structure comprises 145 residues: Bacilliredoxin SH1401 (145 aa).

This sequence belongs to the bacilliredoxin family.

In Staphylococcus haemolyticus (strain JCSC1435), this protein is Bacilliredoxin SH1401.